Consider the following 231-residue polypeptide: Ribonuclease 3 (231 aa).

Positions Met-3–Thr-130 constitute an RNase III domain. Glu-43 lines the Mg(2+) pocket. Asp-47 is an active-site residue. The Mg(2+) site is built by Asp-116 and Glu-119. Glu-119 is an active-site residue. In terms of domain architecture, DRBM spans Asp-157–Lys-228.

Belongs to the ribonuclease III family. In terms of assembly, homodimer. The cofactor is Mg(2+).

The protein localises to the cytoplasm. The enzyme catalyses Endonucleolytic cleavage to 5'-phosphomonoester.. Digests double-stranded RNA. Involved in the processing of primary rRNA transcript to yield the immediate precursors to the large and small rRNAs (23S and 16S). Processes some mRNAs, and tRNAs when they are encoded in the rRNA operon. Processes pre-crRNA and tracrRNA of type II CRISPR loci if present in the organism. This is Ribonuclease 3 from Mesoplasma florum (strain ATCC 33453 / NBRC 100688 / NCTC 11704 / L1) (Acholeplasma florum).